A 211-amino-acid chain; its full sequence is Small ribosomal subunit protein uS4 (211 aa).

The disordered stretch occupies residues 27-48 (GRKVLERRGSQPPGQHGASVRR). An S4 RNA-binding domain is found at 99–162 (RRLDNVVFRL…RKRDYFKDLE (64 aa)).

Belongs to the universal ribosomal protein uS4 family. Part of the 30S ribosomal subunit. Contacts protein S5. The interaction surface between S4 and S5 is involved in control of translational fidelity.

In terms of biological role, one of the primary rRNA binding proteins, it binds directly to 16S rRNA where it nucleates assembly of the body of the 30S subunit. Its function is as follows. With S5 and S12 plays an important role in translational accuracy. This Herpetosiphon aurantiacus (strain ATCC 23779 / DSM 785 / 114-95) protein is Small ribosomal subunit protein uS4.